The sequence spans 202 residues: LexA repressor (202 aa).

The H-T-H motif DNA-binding region spans 28–48; it reads RAEIAQRLGFRSPNAAEEHLK. Active-site for autocatalytic cleavage activity residues include Ser119 and Lys156.

It belongs to the peptidase S24 family. In terms of assembly, homodimer.

The enzyme catalyses Hydrolysis of Ala-|-Gly bond in repressor LexA.. Its function is as follows. Represses a number of genes involved in the response to DNA damage (SOS response), including recA and lexA. Binds to the 16 bp palindromic sequence 5'-CTGTATATATATACAG-3'. In the presence of single-stranded DNA, RecA interacts with LexA causing an autocatalytic cleavage which disrupts the DNA-binding part of LexA, leading to derepression of the SOS regulon and eventually DNA repair. This chain is LexA repressor, found in Klebsiella pneumoniae subsp. pneumoniae (strain ATCC 700721 / MGH 78578).